The sequence spans 149 residues: Ribonuclease H (149 aa).

The 143-residue stretch at methionine 1–glutamate 143 folds into the RNase H type-1 domain. Mg(2+)-binding residues include aspartate 9, glutamate 47, aspartate 69, and aspartate 135.

Belongs to the RNase H family. In terms of assembly, monomer. Requires Mg(2+) as cofactor.

Its subcellular location is the cytoplasm. It carries out the reaction Endonucleolytic cleavage to 5'-phosphomonoester.. Its function is as follows. Endonuclease that specifically degrades the RNA of RNA-DNA hybrids. This chain is Ribonuclease H, found in Albidiferax ferrireducens (strain ATCC BAA-621 / DSM 15236 / T118) (Rhodoferax ferrireducens).